A 214-amino-acid chain; its full sequence is 3-isopropylmalate dehydratase small subunit (214 aa).

It belongs to the LeuD family. LeuD type 1 subfamily. Heterodimer of LeuC and LeuD.

The enzyme catalyses (2R,3S)-3-isopropylmalate = (2S)-2-isopropylmalate. Its pathway is amino-acid biosynthesis; L-leucine biosynthesis; L-leucine from 3-methyl-2-oxobutanoate: step 2/4. Functionally, catalyzes the isomerization between 2-isopropylmalate and 3-isopropylmalate, via the formation of 2-isopropylmaleate. In Desulforapulum autotrophicum (strain ATCC 43914 / DSM 3382 / VKM B-1955 / HRM2) (Desulfobacterium autotrophicum), this protein is 3-isopropylmalate dehydratase small subunit.